Reading from the N-terminus, the 377-residue chain is Nitric oxide reductase FlRd-NAD(+) reductase (377 aa).

It belongs to the FAD-dependent oxidoreductase family. Requires FAD as cofactor.

Its subcellular location is the cytoplasm. The enzyme catalyses 2 reduced [nitric oxide reductase rubredoxin domain] + NAD(+) + H(+) = 2 oxidized [nitric oxide reductase rubredoxin domain] + NADH. The protein operates within nitrogen metabolism; nitric oxide reduction. Functionally, one of at least two accessory proteins for anaerobic nitric oxide (NO) reductase. Reduces the rubredoxin moiety of NO reductase. In Escherichia coli O6:K15:H31 (strain 536 / UPEC), this protein is Nitric oxide reductase FlRd-NAD(+) reductase.